A 510-amino-acid polypeptide reads, in one-letter code: GMP synthase [glutamine-hydrolyzing] (510 aa).

In terms of domain architecture, Glutamine amidotransferase type-1 spans leucine 5–aspartate 195. Residue cysteine 82 is the Nucleophile of the active site. Catalysis depends on residues histidine 169 and glutamate 171. The 190-residue stretch at tryptophan 196–arginine 385 folds into the GMPS ATP-PPase domain. Serine 223–serine 229 is a binding site for ATP.

In terms of assembly, homodimer.

It carries out the reaction XMP + L-glutamine + ATP + H2O = GMP + L-glutamate + AMP + diphosphate + 2 H(+). It functions in the pathway purine metabolism; GMP biosynthesis; GMP from XMP (L-Gln route): step 1/1. Catalyzes the synthesis of GMP from XMP. The polypeptide is GMP synthase [glutamine-hydrolyzing] (Finegoldia magna (strain ATCC 29328 / DSM 20472 / WAL 2508) (Peptostreptococcus magnus)).